We begin with the raw amino-acid sequence, 560 residues long: Dihydroxy-acid dehydratase (560 aa).

Position 50 (Cys50) interacts with [2Fe-2S] cluster. Asp82 lines the Mg(2+) pocket. Position 123 (Cys123) interacts with [2Fe-2S] cluster. Mg(2+) is bound by residues Asp124 and Lys125. N6-carboxylysine is present on Lys125. A [2Fe-2S] cluster-binding site is contributed by Cys195. Mg(2+) is bound at residue Glu447. The active-site Proton acceptor is Ser473.

The protein belongs to the IlvD/Edd family. Homodimer. It depends on [2Fe-2S] cluster as a cofactor. The cofactor is Mg(2+).

The enzyme catalyses (2R)-2,3-dihydroxy-3-methylbutanoate = 3-methyl-2-oxobutanoate + H2O. It catalyses the reaction (2R,3R)-2,3-dihydroxy-3-methylpentanoate = (S)-3-methyl-2-oxopentanoate + H2O. The protein operates within amino-acid biosynthesis; L-isoleucine biosynthesis; L-isoleucine from 2-oxobutanoate: step 3/4. It functions in the pathway amino-acid biosynthesis; L-valine biosynthesis; L-valine from pyruvate: step 3/4. Functions in the biosynthesis of branched-chain amino acids. Catalyzes the dehydration of (2R,3R)-2,3-dihydroxy-3-methylpentanoate (2,3-dihydroxy-3-methylvalerate) into 2-oxo-3-methylpentanoate (2-oxo-3-methylvalerate) and of (2R)-2,3-dihydroxy-3-methylbutanoate (2,3-dihydroxyisovalerate) into 2-oxo-3-methylbutanoate (2-oxoisovalerate), the penultimate precursor to L-isoleucine and L-valine, respectively. In Thermosynechococcus vestitus (strain NIES-2133 / IAM M-273 / BP-1), this protein is Dihydroxy-acid dehydratase.